A 106-amino-acid chain; its full sequence is Integration host factor subunit alpha (106 aa).

This sequence belongs to the bacterial histone-like protein family. As to quaternary structure, heterodimer of an alpha and a beta chain.

Functionally, this protein is one of the two subunits of integration host factor, a specific DNA-binding protein that functions in genetic recombination as well as in transcriptional and translational control. The sequence is that of Integration host factor subunit alpha from Nitrobacter winogradskyi (strain ATCC 25391 / DSM 10237 / CIP 104748 / NCIMB 11846 / Nb-255).